The primary structure comprises 121 residues: MATEGDVELELETETSGPERPPEKPRKHDSGAADLERVTDYAEEKEIQSSNLETAMSVIGDRRSREQKAKQEREKELAKVTIKKEDLELIMTEMEISRAAAERSLREHMGNVVEALIALTN.

Positions 1 to 13 (MATEGDVELELET) are enriched in acidic residues. The tract at residues 1 to 75 (MATEGDVELE…EQKAKQEREK (75 aa)) is disordered. Basic and acidic residues-rich tracts occupy residues 20–47 (RPPE…EKEI) and 60–75 (GDRR…EREK). Residue serine 30 is modified to Phosphoserine. The tract at residues 52 to 121 (LETAMSVIGD…VVEALIALTN (70 aa)) is required for association with the NAA10-NAA15 complex. Residues 62–107 (RRSREQKAKQEREKELAKVTIKKEDLELIMTEMEISRAAAERSLRE) are a coiled coil.

As to quaternary structure, component of the N-terminal acetyltransferase A (NatA)/HYPK complex at least composed of NAA10, NAA15 and HYPK, which has N-terminal acetyltransferase activity. Within the complex interacts with NAA10. Within the complex interacts with NAA15. Predominantly interacts with NAA15 in the NAA10-NAA15 complex (also called the NatA complex); the interaction with the NatA complex reduces the acetylation activity of the NatA complex. Interacts with HTT (via N-terminus). The NatA complex is required for HYPK stability and for reducing polyQ aggregation of HTT. Component of the N-terminal acetyltransferase E (NatE)/HYPK complex at least composed of NAA10, NAA15, NAA50 and HYPK. Within the complex interacts with NAA10 and NAA15. Does not interact with NAA50. Interaction with NAA15 reduces the capacity of NAA15 to interact with NAA50. Its capacity to interact with the NatA complex is reduced by NAA50. Does not interact with the N-terminal acetyltransferase B (NatB) complex component NAA25 or the N-terminal acetyltransferase C (NatC) complex component NAA35.

It is found in the nucleus. The protein localises to the cytoplasm. Its function is as follows. Component of several N-terminal acetyltransferase complexes. Inhibits the N-terminal acetylation activity of the N-terminal acetyltransferase NAA10-NAA15 complex (also called the NatA complex). Has chaperone-like activity preventing polyglutamine (polyQ) aggregation of HTT in neuronal cells probably while associated with the NatA complex. May play a role in the NatA complex-mediated N-terminal acetylation of PCNP. The chain is Huntingtin-interacting protein K from Homo sapiens (Human).